A 265-amino-acid chain; its full sequence is Capsule polysaccharide export inner-membrane protein BexB (265 aa).

The next 6 membrane-spanning stretches (helical) occupy residues 37 to 57 (IGFF…VMMW), 64 to 84 (KFST…AMMW), 118 to 138 (LLEV…LVMI), 151 to 171 (LIAW…ICAI), 178 to 198 (FGKI…AFFF), and 235 to 255 (ESIG…LVMV). Residues 37–258 (IGFFWLFVEP…LLGLVMVKNF (222 aa)) form the ABC transmembrane type-2 domain.

It belongs to the ABC-2 integral membrane protein family.

The protein resides in the cell inner membrane. May form an ATP-driven capsule polysaccharide export apparatus, in association with the BexA, BexC and BexD proteins. In Haemophilus influenzae, this protein is Capsule polysaccharide export inner-membrane protein BexB (bexB).